The sequence spans 80 residues: uncharacterized protein (80 aa).

The protein to B.cereus similar ORF in glnR 5'region.

This is an uncharacterized protein from Bacillus cereus.